The following is a 296-amino-acid chain: MYFRGPAVGLTFCCFYLSSYFTNKYVLSVLKFTYPTLFQGWQTLVGGLILHICWKVGWLEINCNSRSDVVLWLPGCALFVGIIYAGSRALSRLPIPVFFTLHNAAEVVSYGFQRLLFREKCPYSKIFSIFLLLLSAGCLPLHDPQFDADGYFWAVIHLFCVGCYKVFKKSQKSGSLSDLDQQYINYVFSVVLLGLASHPTGDLISALEFPFLYFYRFHSGCCASGILGFLLMLASVKLRSNLSSVQHASWNFVAKVITAGLSLIYFQITLTVPLTLCLLAGGLGEAVLVYAERTGV.

A run of 10 helical transmembrane segments spans residues 7-29 (AVGL…VLSV), 41-61 (WQTL…WLEI), 67-87 (SDVV…YAGS), 93-113 (LPIP…YGFQ), 126-146 (IFSI…DPQF), 147-167 (DADG…YKVF), 187-207 (VFSV…ISAL), 217-237 (FHSG…ASVK), 248-266 (ASWN…LIYF), and 272-291 (VPLT…LVYA).

This sequence belongs to the nucleotide-sugar transporter family. SLC35A subfamily.

The protein resides in the golgi apparatus. The protein localises to the cis-Golgi network membrane. In terms of biological role, golgi-localized UDP-N-acetylglucosamine (UDP-GlcNAc) transporter that transports UDP-N-acetylglucosamine into Golgi lumen. The sequence is that of UDP-N-acetylglucosamine transporter TMEM241 homolog (tmem241) from Xenopus laevis (African clawed frog).